Here is a 253-residue protein sequence, read N- to C-terminus: DNA repair protein RecO (253 aa).

Belongs to the RecO family.

Involved in DNA repair and RecF pathway recombination. The chain is DNA repair protein RecO from Streptococcus agalactiae serotype III (strain NEM316).